A 685-amino-acid chain; its full sequence is E3 ubiquitin-protein ligase RNF103 (685 aa).

4 helical membrane passes run 6–26 (FFLL…EAIV), 326–346 (LFVL…FITQ), 366–386 (LLII…LDSF), and 411–431 (MFYS…GLLI). Positions 526 to 543 (EEMSEGSQDTENDSESEN) are enriched in acidic residues. Residues 526-550 (EEMSEGSQDTENDSESENTDTLSSE) form a disordered region. The segment at 621–663 (CVVCLENFENGCLLMGLPCGHVFHQNCIVMWLAGGRHCCPVCR) adopts an RING-type zinc-finger fold.

Interacts with DERL1 and VCP. In terms of tissue distribution, highly expressed in the normal cerebellum but not in the cerebral cortex.

The protein localises to the endoplasmic reticulum membrane. The catalysed reaction is S-ubiquitinyl-[E2 ubiquitin-conjugating enzyme]-L-cysteine + [acceptor protein]-L-lysine = [E2 ubiquitin-conjugating enzyme]-L-cysteine + N(6)-ubiquitinyl-[acceptor protein]-L-lysine.. The protein operates within protein modification; protein ubiquitination. In terms of biological role, acts as an E2-dependent E3 ubiquitin-protein ligase, probably involved in the ER-associated protein degradation pathway. The polypeptide is E3 ubiquitin-protein ligase RNF103 (RNF103) (Homo sapiens (Human)).